Here is a 549-residue protein sequence, read N- to C-terminus: Urocanate hydratase (549 aa).

Residues 46–47 (GG), Gln-124, 170–172 (GMG), Glu-190, Arg-195, 236–237 (NA), 257–261 (QTSAH), 267–268 (YV), and Tyr-316 each bind NAD(+). The active site involves Cys-404. Gly-486 contacts NAD(+).

It belongs to the urocanase family. The cofactor is NAD(+).

Its subcellular location is the cytoplasm. The enzyme catalyses 4-imidazolone-5-propanoate = trans-urocanate + H2O. It participates in amino-acid degradation; L-histidine degradation into L-glutamate; N-formimidoyl-L-glutamate from L-histidine: step 2/3. Catalyzes the conversion of urocanate to 4-imidazolone-5-propionate. In Natranaerobius thermophilus (strain ATCC BAA-1301 / DSM 18059 / JW/NM-WN-LF), this protein is Urocanate hydratase.